The primary structure comprises 275 residues: MSTYFVGDLHGCFDELQKLLERVRFDPVKDKLYFTGDLIARGEKSLECLRFVKNLGTSAQTVLGNHDLHLLACAYGIKKVKTRDNLTALFAAPDFDELMDWLRQQPLLVHNDHFNFSLVHAGISPDWDMATAQACAREVEAVLRQGDYRALLRQMYDSRPERWSSDLQGIERLRYSINVFTRMRFCYADHRLDFDCKLPLEQAPSELMPWFACDNPLFKTENIIFGHWASLVDCPTPGNIYALDTGCAWGNRMTLLRWDDKRIFSQSAVKKTGVF.

Belongs to the Ap4A hydrolase family.

It catalyses the reaction P(1),P(4)-bis(5'-adenosyl) tetraphosphate + H2O = 2 ADP + 2 H(+). Its function is as follows. Hydrolyzes diadenosine 5',5'''-P1,P4-tetraphosphate to yield ADP. The chain is Bis(5'-nucleosyl)-tetraphosphatase, symmetrical from Actinobacillus succinogenes (strain ATCC 55618 / DSM 22257 / CCUG 43843 / 130Z).